Here is a 200-residue protein sequence, read N- to C-terminus: Pyridoxal 5'-phosphate synthase subunit PdxT (200 aa).

46–48 provides a ligand contact to L-glutamine; the sequence is GES. The Nucleophile role is filled by C78. Residues R107 and 138-139 contribute to the L-glutamine site; that span reads IR. Active-site charge relay system residues include H175 and E177.

Belongs to the glutaminase PdxT/SNO family. As to quaternary structure, in the presence of PdxS, forms a dodecamer of heterodimers. Only shows activity in the heterodimer.

The enzyme catalyses aldehydo-D-ribose 5-phosphate + D-glyceraldehyde 3-phosphate + L-glutamine = pyridoxal 5'-phosphate + L-glutamate + phosphate + 3 H2O + H(+). The catalysed reaction is L-glutamine + H2O = L-glutamate + NH4(+). Its pathway is cofactor biosynthesis; pyridoxal 5'-phosphate biosynthesis. Its function is as follows. Catalyzes the hydrolysis of glutamine to glutamate and ammonia as part of the biosynthesis of pyridoxal 5'-phosphate. The resulting ammonia molecule is channeled to the active site of PdxS. In Corynebacterium glutamicum (strain ATCC 13032 / DSM 20300 / JCM 1318 / BCRC 11384 / CCUG 27702 / LMG 3730 / NBRC 12168 / NCIMB 10025 / NRRL B-2784 / 534), this protein is Pyridoxal 5'-phosphate synthase subunit PdxT.